The sequence spans 61 residues: Large ribosomal subunit protein bL32 (61 aa).

The protein belongs to the bacterial ribosomal protein bL32 family.

In Ehrlichia canis (strain Jake), this protein is Large ribosomal subunit protein bL32.